The primary structure comprises 209 residues: Probable GTP-binding protein EngB (209 aa).

Residues 22–198 form the EngB-type G domain; that stretch reads TPLEIAFVGR…NRTVGSWFDA (177 aa). Mg(2+) is bound by residues serine 37 and threonine 59.

Belongs to the TRAFAC class TrmE-Era-EngA-EngB-Septin-like GTPase superfamily. EngB GTPase family. Requires Mg(2+) as cofactor.

Necessary for normal cell division and for the maintenance of normal septation. The polypeptide is Probable GTP-binding protein EngB (Neisseria gonorrhoeae (strain ATCC 700825 / FA 1090)).